The sequence spans 271 residues: Putative carboxymethylenebutenolidase (271 aa).

Residues Cys-147, Asp-204, and His-236 contribute to the active site.

This sequence belongs to the dienelactone hydrolase family.

It catalyses the reaction 2-(5-oxo-2,5-dihydrofuran-2-ylidene)acetate + H2O = 4-oxohex-2-enedioate + H(+). The polypeptide is Putative carboxymethylenebutenolidase (ysgA) (Escherichia coli O157:H7).